The sequence spans 295 residues: Bifunctional protein FolD (295 aa).

NADP(+)-binding positions include 166–168 (GRS), S195, and I236.

It belongs to the tetrahydrofolate dehydrogenase/cyclohydrolase family. As to quaternary structure, homodimer.

It catalyses the reaction (6R)-5,10-methylene-5,6,7,8-tetrahydrofolate + NADP(+) = (6R)-5,10-methenyltetrahydrofolate + NADPH. The catalysed reaction is (6R)-5,10-methenyltetrahydrofolate + H2O = (6R)-10-formyltetrahydrofolate + H(+). The protein operates within one-carbon metabolism; tetrahydrofolate interconversion. Functionally, catalyzes the oxidation of 5,10-methylenetetrahydrofolate to 5,10-methenyltetrahydrofolate and then the hydrolysis of 5,10-methenyltetrahydrofolate to 10-formyltetrahydrofolate. The chain is Bifunctional protein FolD from Chlorobium luteolum (strain DSM 273 / BCRC 81028 / 2530) (Pelodictyon luteolum).